The primary structure comprises 289 residues: Protease HtpX homolog (289 aa).

2 helical membrane-spanning segments follow: residues 10–30 (TAALFGVLWAVLLGLGAVIGS) and 34–54 (STTPIWIMALVGVGTTAYGYW). Residue H138 participates in Zn(2+) binding. The active site involves E139. H142 provides a ligand contact to Zn(2+). 2 helical membrane passes run 153–173 (VAAAVAGVITSVGQMLLIFGG) and 182–202 (LAVMAMALLAPLAAVVIQSAI). E207 is a Zn(2+) binding site.

Belongs to the peptidase M48B family. Requires Zn(2+) as cofactor.

Its subcellular location is the cell membrane. The polypeptide is Protease HtpX homolog (Arthrobacter sp. (strain FB24)).